The primary structure comprises 394 residues: Queuine tRNA-ribosyltransferase accessory subunit 2 (394 aa).

4 residues coordinate Zn(2+): C336, C338, C341, and H367.

Belongs to the queuine tRNA-ribosyltransferase family. QTRT2 subfamily. Heterodimer of a catalytic subunit and an accessory subunit. Requires Zn(2+) as cofactor.

It localises to the cytoplasm. In terms of biological role, non-catalytic subunit of the queuine tRNA-ribosyltransferase (TGT) that catalyzes the base-exchange of a guanine (G) residue with queuine (Q) at position 34 (anticodon wobble position) in tRNAs with GU(N) anticodons (tRNA-Asp, -Asn, -His and -Tyr), resulting in the hypermodified nucleoside queuosine (7-(((4,5-cis-dihydroxy-2-cyclopenten-1-yl)amino)methyl)-7-deazaguanosine). The sequence is that of Queuine tRNA-ribosyltransferase accessory subunit 2 from Ixodes scapularis (Black-legged tick).